Consider the following 61-residue polypeptide: MALKITQVKGTIGTKPKHRDNLRSLGLKRIRHSVVRPDTPEVRGMVQAVRHLIVVEEVAGE.

The protein belongs to the universal ribosomal protein uL30 family. As to quaternary structure, part of the 50S ribosomal subunit.

The chain is Large ribosomal subunit protein uL30 from Corynebacterium efficiens (strain DSM 44549 / YS-314 / AJ 12310 / JCM 11189 / NBRC 100395).